Consider the following 87-residue polypeptide: Omega-lycotoxin-Am1a (87 aa).

Positions 1–17 are cleaved as a signal peptide; that stretch reads MKLSIFFVLFFIAIAYC. The propeptide occupies 18–40; the sequence is QPEFLDDEEDEVEETLPVAEEGR. Cystine bridges form between Cys44–Cys59, Cys51–Cys64, Cys58–Cys84, and Cys66–Cys82.

It belongs to the neurotoxin omega-lctx family. In terms of tissue distribution, expressed by the venom gland.

It localises to the secreted. Modulates Cav2.1/CACNA1A voltage-gated calcium channels (P/Q-type currents) in rat cerebellar Purkinje cells and hippocampal CA1-CA3 neurons. At saturating concentrations (&gt;10 nM) decelerates activation kinetics and slightly increases peak amplitude without affecting deactivation kinetics. In vivo, does not cause death when intravenously injected into mice. In rat models, through its activity on Cav2.1/CACNA1A, has an ameliorative effect on memory defects provoked by hyperstimulation of N-methyl-D-aspartate receptors (NMDARs) in the hippocampus. In Alopecosa marikovskyi (Wolf spider), this protein is Omega-lycotoxin-Am1a.